We begin with the raw amino-acid sequence, 228 residues long: UPF0758 protein NT01CX_1687 (228 aa).

Positions 106–228 (IIKSPGDVAG…YISLKEKNIL (123 aa)) constitute an MPN domain. Residues histidine 177, histidine 179, and aspartate 190 each coordinate Zn(2+). Positions 177–190 (HNHPSGDPTPSSED) match the JAMM motif motif.

Belongs to the UPF0758 family.

In Clostridium novyi (strain NT), this protein is UPF0758 protein NT01CX_1687.